A 625-amino-acid chain; its full sequence is Phosphomethylpyrimidine synthase (625 aa).

Substrate-binding positions include N237, M266, Y295, H331, 351–353 (SRG), 392–395 (DGLR), and E431. H435 contacts Zn(2+). Y458 is a substrate binding site. H499 serves as a coordination point for Zn(2+). [4Fe-4S] cluster-binding residues include C579, C582, and C587.

The protein belongs to the ThiC family. Homodimer. Requires [4Fe-4S] cluster as cofactor.

It carries out the reaction 5-amino-1-(5-phospho-beta-D-ribosyl)imidazole + S-adenosyl-L-methionine = 4-amino-2-methyl-5-(phosphooxymethyl)pyrimidine + CO + 5'-deoxyadenosine + formate + L-methionine + 3 H(+). The protein operates within cofactor biosynthesis; thiamine diphosphate biosynthesis. Its function is as follows. Catalyzes the synthesis of the hydroxymethylpyrimidine phosphate (HMP-P) moiety of thiamine from aminoimidazole ribotide (AIR) in a radical S-adenosyl-L-methionine (SAM)-dependent reaction. The sequence is that of Phosphomethylpyrimidine synthase from Cupriavidus metallidurans (strain ATCC 43123 / DSM 2839 / NBRC 102507 / CH34) (Ralstonia metallidurans).